The sequence spans 259 residues: Haloacid dehalogenase-like hydrolase domain-containing protein 2 (259 aa).

Positions 13 and 15 each coordinate Mg(2+). Residues 13–15 (DLS) and 46–47 (TN) contribute to the substrate site. Residues 47 to 71 (NTTKESKQDLLERLRKLEFDISEDE) are a coiled coil. Position 50 is an N6-succinyllysine (K50). K179 lines the substrate pocket. Position 204 (D204) interacts with Mg(2+).

The protein belongs to the HAD-like hydrolase superfamily. Requires Mg(2+) as cofactor.

The protein is Haloacid dehalogenase-like hydrolase domain-containing protein 2 (HDHD2) of Homo sapiens (Human).